Here is a 589-residue protein sequence, read N- to C-terminus: Sulfite reductase [NADPH] hemoprotein beta-component (589 aa).

[4Fe-4S] cluster is bound by residues C443, C449, C488, and C492. C492 lines the siroheme pocket.

It belongs to the nitrite and sulfite reductase 4Fe-4S domain family. As to quaternary structure, alpha(8)-beta(8). The alpha component is a flavoprotein, the beta component is a hemoprotein. The cofactor is siroheme. [4Fe-4S] cluster is required as a cofactor.

The enzyme catalyses hydrogen sulfide + 3 NADP(+) + 3 H2O = sulfite + 3 NADPH + 4 H(+). It participates in sulfur metabolism; hydrogen sulfide biosynthesis; hydrogen sulfide from sulfite (NADPH route): step 1/1. In terms of biological role, component of the sulfite reductase complex that catalyzes the 6-electron reduction of sulfite to sulfide. This is one of several activities required for the biosynthesis of L-cysteine from sulfate. This Neisseria meningitidis serogroup C (strain 053442) protein is Sulfite reductase [NADPH] hemoprotein beta-component.